Here is a 266-residue protein sequence, read N- to C-terminus: Nuclease (266 aa).

The N-terminal stretch at 1-21 is a signal peptide; the sequence is MRFNNKMLALAALLFAAQASA. Cys30 and Cys34 form a disulfide bridge. The Proton acceptor role is filled by His110. Asn140 lines the Mg(2+) pocket. The cysteines at positions 222 and 264 are disulfide-linked.

The protein belongs to the DNA/RNA non-specific endonuclease family. In terms of assembly, homodimer. Requires Mg(2+) as cofactor.

The protein localises to the secreted. The catalysed reaction is Endonucleolytic cleavage to 5'-phosphomononucleotide and 5'-phosphooligonucleotide end-products.. In terms of biological role, catalyzes the hydrolysis of both DNA and RNA, double- or single-stranded, at the 3'position of the phosphodiester bond to produce 5'-phosphorylated mono-, di-, tri- and tetranucleotides. DNA is a slightly better substrate than RNA. This Serratia marcescens protein is Nuclease (nucA).